A 308-amino-acid polypeptide reads, in one-letter code: Pseudouridine-5'-phosphate glycosidase (308 aa).

The active-site Proton donor is the glutamate 29. Substrate contacts are provided by lysine 90 and valine 110. A Mn(2+)-binding site is contributed by aspartate 142. Substrate is bound at residue 144–146; the sequence is SSD. The active-site Nucleophile is the lysine 163.

This sequence belongs to the pseudouridine-5'-phosphate glycosidase family. As to quaternary structure, homotrimer. The cofactor is Mn(2+).

It carries out the reaction D-ribose 5-phosphate + uracil = psi-UMP + H2O. In terms of biological role, catalyzes the reversible cleavage of pseudouridine 5'-phosphate (PsiMP) to ribose 5-phosphate and uracil. Functions biologically in the cleavage direction, as part of a pseudouridine degradation pathway. This Serratia proteamaculans (strain 568) protein is Pseudouridine-5'-phosphate glycosidase.